Consider the following 332-residue polypeptide: Malate dehydrogenase, cytoplasmic (332 aa).

NAD(+) is bound by residues 16–17 (QI), aspartate 43, and glycine 90. Arginine 99 serves as a coordination point for oxaloacetate. NAD(+) is bound by residues glutamine 113 and asparagine 132. 4 residues coordinate oxaloacetate: asparagine 132, arginine 163, histidine 188, and serine 243. Histidine 188 acts as the Proton acceptor in catalysis.

It belongs to the LDH/MDH superfamily. MDH type 2 family. Homodimer.

Its subcellular location is the cytoplasm. The catalysed reaction is (S)-malate + NAD(+) = oxaloacetate + NADH + H(+). In Medicago sativa (Alfalfa), this protein is Malate dehydrogenase, cytoplasmic (CMDH).